The sequence spans 535 residues: MTKYIFVTGGVVSSLGKGITAASLGRLLKNRGMDVTIQKFDPYINVDPGTMSPYQHGEVFVTDDGAETDLDLGHYERFIDINLNKYSNVTTGKIYSTVLKKERRGDYLGGTVQVIPHITNEIKDRVYRAGKETGADVVITEIGGTVGDIESLPFLEAIRQMKSDIGRENVMYIHCTLVPYIRAAGELKTKPTQHSVKELRSLGIQPNVIVVRTEMPMTQDMKDKIALFCDIDTKAVIECQDADTLYSIPLDLQKQGLDKLVCEHMKLDCQDADMTEWTALVDKVQNLSKQVTIGLVGKYVELQDAYISVVESLRHAGYAFDADVQIKWINAEEVTAENMADFAQDVDGIIVPGGFGDRGVEGKIIATQYARENKVPFFGICLGMQVASIEYARNVLGLEGAHSAEIDPETAFPIIDLLPEQKDVDDLGGTLRLGLYPCKLNEDSKAFAAYNDEVVYERHRHRYEFNNEFRQQMEAAGFVFSGTSPDGRLVEIIELKDHPWFLASQFHPEFVSRPTRPQPLFRDFVGASLQASESK.

Positions 1-267 (MTKYIFVTGG…DKLVCEHMKL (267 aa)) are amidoligase domain. Ser-13 contacts CTP. Ser-13 contributes to the UTP binding site. An ATP-binding site is contributed by 14 to 19 (SLGKGI). Tyr-54 lines the L-glutamine pocket. Asp-71 is an ATP binding site. Asp-71 and Glu-141 together coordinate Mg(2+). CTP-binding positions include 148–150 (DIE), 188–193 (KTKPTQ), and Lys-224. UTP contacts are provided by residues 188–193 (KTKPTQ) and Lys-224. In terms of domain architecture, Glutamine amidotransferase type-1 spans 292–534 (TIGLVGKYVE…VGASLQASES (243 aa)). Gly-354 lines the L-glutamine pocket. Cys-381 acts as the Nucleophile; for glutamine hydrolysis in catalysis. L-glutamine is bound by residues 382 to 385 (LGMQ), Glu-405, and Arg-462. Catalysis depends on residues His-507 and Glu-509.

It belongs to the CTP synthase family. In terms of assembly, homotetramer.

It carries out the reaction UTP + L-glutamine + ATP + H2O = CTP + L-glutamate + ADP + phosphate + 2 H(+). It catalyses the reaction L-glutamine + H2O = L-glutamate + NH4(+). The catalysed reaction is UTP + NH4(+) + ATP = CTP + ADP + phosphate + 2 H(+). The protein operates within pyrimidine metabolism; CTP biosynthesis via de novo pathway; CTP from UDP: step 2/2. Allosterically activated by GTP, when glutamine is the substrate; GTP has no effect on the reaction when ammonia is the substrate. The allosteric effector GTP functions by stabilizing the protein conformation that binds the tetrahedral intermediate(s) formed during glutamine hydrolysis. Inhibited by the product CTP, via allosteric rather than competitive inhibition. Catalyzes the ATP-dependent amination of UTP to CTP with either L-glutamine or ammonia as the source of nitrogen. Regulates intracellular CTP levels through interactions with the four ribonucleotide triphosphates. The chain is CTP synthase from Bacillus pumilus (strain SAFR-032).